The following is a 373-amino-acid chain: Peroxisomal biogenesis factor 3 (373 aa).

The Cytoplasmic portion of the chain corresponds to 1 to 15 (MLRSVWNFLKRHKKK). The tract at residues 1-45 (MLRSVWNFLKRHKKKCIFLGTVLGGVYILGKYGQKKIREIQEREA) is targeting to peroxisomes. The chain crosses the membrane as a helical span at residues 16–36 (CIFLGTVLGGVYILGKYGQKK). Residues 37–116 (IREIQEREAA…LKIISFTRST (80 aa)) lie on the Peroxisomal side of the membrane. The helical transmembrane segment at 117–140 (VAVYSTCMLVVLLRVQLNIIGGYI) threads the bilayer. An interaction with PEX19 region spans residues 120–136 (YSTCMLVVLLRVQLNII). Residues 141–373 (YLDNAAVGKN…AFSTPQQLEK (233 aa)) lie on the Cytoplasmic side of the membrane.

This sequence belongs to the peroxin-3 family. As to quaternary structure, interacts with PEX19. As to expression, found in all examined tissues.

It localises to the peroxisome membrane. Involved in peroxisome biosynthesis and integrity. Assembles membrane vesicles before the matrix proteins are translocated. As a docking factor for PEX19, is necessary for the import of peroxisomal membrane proteins in the peroxisomes. This Homo sapiens (Human) protein is Peroxisomal biogenesis factor 3 (PEX3).